Here is a 299-residue protein sequence, read N- to C-terminus: ATP phosphoribosyltransferase (299 aa).

It belongs to the ATP phosphoribosyltransferase family. Long subfamily. As to quaternary structure, equilibrium between an active dimeric form, an inactive hexameric form and higher aggregates. Interconversion between the various forms is largely reversible and is influenced by the natural substrates and inhibitors of the enzyme. Mg(2+) is required as a cofactor.

It is found in the cytoplasm. The catalysed reaction is 1-(5-phospho-beta-D-ribosyl)-ATP + diphosphate = 5-phospho-alpha-D-ribose 1-diphosphate + ATP. It functions in the pathway amino-acid biosynthesis; L-histidine biosynthesis; L-histidine from 5-phospho-alpha-D-ribose 1-diphosphate: step 1/9. Feedback inhibited by histidine. Functionally, catalyzes the condensation of ATP and 5-phosphoribose 1-diphosphate to form N'-(5'-phosphoribosyl)-ATP (PR-ATP). Has a crucial role in the pathway because the rate of histidine biosynthesis seems to be controlled primarily by regulation of HisG enzymatic activity. This Escherichia coli O7:K1 (strain IAI39 / ExPEC) protein is ATP phosphoribosyltransferase.